Reading from the N-terminus, the 359-residue chain is Tryptophan 2,3-dioxygenase (359 aa).

Residues 38–42 and Arg109 each bind substrate; that span reads FIIVH. His295 contacts heme. Thr309 serves as a coordination point for substrate.

This sequence belongs to the tryptophan 2,3-dioxygenase family. As to quaternary structure, homotetramer. Requires heme as cofactor.

The catalysed reaction is L-tryptophan + O2 = N-formyl-L-kynurenine. The protein operates within amino-acid degradation; L-tryptophan degradation via kynurenine pathway; L-kynurenine from L-tryptophan: step 1/2. In terms of biological role, heme-dependent dioxygenase that catalyzes the oxidative cleavage of the L-tryptophan (L-Trp) pyrrole ring and converts L-tryptophan to N-formyl-L-kynurenine. Catalyzes the oxidative cleavage of the indole moiety. The sequence is that of Tryptophan 2,3-dioxygenase from Bdellovibrio bacteriovorus (strain ATCC 15356 / DSM 50701 / NCIMB 9529 / HD100).